We begin with the raw amino-acid sequence, 156 residues long: Ribosomal RNA large subunit methyltransferase H (156 aa).

S-adenosyl-L-methionine contacts are provided by residues Leu73, Gly104, and 123 to 128 (LSALTL).

This sequence belongs to the RNA methyltransferase RlmH family. In terms of assembly, homodimer.

The protein localises to the cytoplasm. It carries out the reaction pseudouridine(1915) in 23S rRNA + S-adenosyl-L-methionine = N(3)-methylpseudouridine(1915) in 23S rRNA + S-adenosyl-L-homocysteine + H(+). Specifically methylates the pseudouridine at position 1915 (m3Psi1915) in 23S rRNA. The polypeptide is Ribosomal RNA large subunit methyltransferase H (Shewanella woodyi (strain ATCC 51908 / MS32)).